The sequence spans 679 residues: NADPH--cytochrome P450 reductase (679 aa).

The Lumenal portion of the chain corresponds to 1–21 (MASEQTIDGAAAIPSGGGDEP). A helical membrane pass occupies residues 22–42 (FLGLLDVALLAVLIGGAAFYF). At 43–679 (LRSRKKEEEP…QKRYSADVWS (637 aa)) the chain is on the cytoplasmic side. Positions 84 to 228 (LVVFYGSQTG…DFITWKDRFW (145 aa)) constitute a Flavodoxin-like domain. FMN contacts are provided by residues 90 to 95 (SQTGTG), 142 to 145 (ATYG), 177 to 186 (LGNKTYEHYN), and D212. An FAD-binding FR-type domain is found at 283 to 523 (KNPFLAPIKV…FIRKSQFRLP (241 aa)). Residue R302 participates in NADP(+) binding. Residues 458-461 (RYYS), 476-478 (TAV), Y482, and 492-495 (GVAT) each bind FAD. Residues T537, 597–598 (SR), 603–607 (KVYVQ), and D640 each bind NADP(+). Residue W678 coordinates FAD.

Belongs to the NADPH--cytochrome P450 reductase family. The protein in the N-terminal section; belongs to the flavodoxin family. This sequence in the C-terminal section; belongs to the flavoprotein pyridine nucleotide cytochrome reductase family. Interacts with sturkopf. The cofactor is FAD. Requires FMN as cofactor. As to expression, high in antennae.

It localises to the endoplasmic reticulum membrane. It carries out the reaction 2 oxidized [cytochrome P450] + NADPH = 2 reduced [cytochrome P450] + NADP(+) + H(+). This enzyme is required for electron transfer from NADP to cytochrome p450 in microsomes. It can also provide electron transfer to heme oxygenase and cytochrome b5. May function to clear the olfactory organ (antennae) from accumulating chemicals. In Drosophila melanogaster (Fruit fly), this protein is NADPH--cytochrome P450 reductase (Cpr).